The sequence spans 418 residues: Putative FBD-associated F-box protein At5g56560 (418 aa).

Residues 4 to 60 (QTRLSDLPDELLLKILSALPMFKVTLATRLISRRWKGPWKLVPDVTFDDDDIPFKSF) form the F-box domain. The FBD domain maps to 340–390 (LWEEPAVVAKCLSEHLEIFEWRQYEGTEQERNVAGYILANATCLKMATFST).

This chain is Putative FBD-associated F-box protein At5g56560, found in Arabidopsis thaliana (Mouse-ear cress).